A 146-amino-acid polypeptide reads, in one-letter code: UPF0260 protein Sama_1927 (146 aa).

The protein belongs to the UPF0260 family.

The sequence is that of UPF0260 protein Sama_1927 from Shewanella amazonensis (strain ATCC BAA-1098 / SB2B).